Consider the following 182-residue polypeptide: ATP-dependent protease subunit HslV (182 aa).

The active site involves Thr10. Positions 166, 169, and 172 each coordinate Na(+).

It belongs to the peptidase T1B family. HslV subfamily. In terms of assembly, a double ring-shaped homohexamer of HslV is capped on each side by a ring-shaped HslU homohexamer. The assembly of the HslU/HslV complex is dependent on binding of ATP.

The protein resides in the cytoplasm. The catalysed reaction is ATP-dependent cleavage of peptide bonds with broad specificity.. With respect to regulation, allosterically activated by HslU binding. Protease subunit of a proteasome-like degradation complex believed to be a general protein degrading machinery. The polypeptide is ATP-dependent protease subunit HslV (Rickettsia bellii (strain OSU 85-389)).